A 248-amino-acid polypeptide reads, in one-letter code: MSQKKQKIQVEQKVPENVAKKTQRDSKLRDAVAKRRTERLAANKTRRAQWEKTAQAYEAEYKAADKSLVDNLRKAKTEGGFYVPAEAKLILVVRIRGINTLNPQVRQTLRLLKLRQLHNAAFVRVNKATIEMIRKVEPYVTYGYPSRAVIKNLIYKRGYAKINGQRIPITNNNVIEQQLGKVGIHSVEDLIHEITTVGPHFKEANRFLWAFKLRGPRGGFIAKRRSFINQGDWGNREDLINDLVKRMI.

The tract at residues 1–45 (MSQKKQKIQVEQKVPENVAKKTQRDSKLRDAVAKRRTERLAANKT) is disordered. Positions 8–41 (IQVEQKVPENVAKKTQRDSKLRDAVAKRRTERLA) are enriched in basic and acidic residues.

It belongs to the universal ribosomal protein uL30 family.

In terms of biological role, binds to G-rich structures in 28S rRNA and in mRNAs. Plays a regulatory role in the translation apparatus; inhibits cell-free translation of mRNAs. The sequence is that of Large ribosomal subunit protein uL30B (Rpl7-2) from Paramecium tetraurelia.